The chain runs to 380 residues: Coiled-coil domain-containing protein 74B (380 aa).

Disordered stretches follow at residues 1 to 51 (MSGA…KRNL), 89 to 108 (LIMN…HLSR), and 128 to 202 (GGPS…DVPQ). Polar residues predominate over residues 34–44 (LRPQSPQLRQS). The stretch at 47–93 (QKRNLDLEKSLQFLQQQHSEMLAKLHEEIEHLKRENKDLRYKLIMNQ) forms a coiled coil. Residues 141 to 151 (RTHRPGGKHGR) are compositionally biased toward basic residues. Over residues 165-182 (DSLSTSSFQSVKSISNSG) the composition is skewed to polar residues.

The sequence is that of Coiled-coil domain-containing protein 74B (CCDC74B) from Homo sapiens (Human).